A 319-amino-acid chain; its full sequence is ATP-dependent 6-phosphofructokinase (319 aa).

G11 provides a ligand contact to ATP. 21 to 25 (RAVVR) provides a ligand contact to ADP. ATP contacts are provided by residues 72–73 (RY) and 102–105 (GDGS). D103 contacts Mg(2+). 125–127 (TID) serves as a coordination point for substrate. The active-site Proton acceptor is the D127. R154 is a binding site for ADP. Substrate-binding positions include R162 and 169-171 (MGR). Residues 185–187 (GAE), R211, and 213–215 (KKH) each bind ADP. Residues E222, R243, and 249 to 252 (HVQR) each bind substrate.

Belongs to the phosphofructokinase type A (PFKA) family. ATP-dependent PFK group I subfamily. Prokaryotic clade 'B1' sub-subfamily. In terms of assembly, homotetramer. Mg(2+) serves as cofactor.

Its subcellular location is the cytoplasm. It catalyses the reaction beta-D-fructose 6-phosphate + ATP = beta-D-fructose 1,6-bisphosphate + ADP + H(+). The protein operates within carbohydrate degradation; glycolysis; D-glyceraldehyde 3-phosphate and glycerone phosphate from D-glucose: step 3/4. Its activity is regulated as follows. Allosterically activated by ADP and other diphosphonucleosides, and allosterically inhibited by phosphoenolpyruvate. In terms of biological role, catalyzes the phosphorylation of D-fructose 6-phosphate to fructose 1,6-bisphosphate by ATP, the first committing step of glycolysis. This is ATP-dependent 6-phosphofructokinase from Listeria welshimeri serovar 6b (strain ATCC 35897 / DSM 20650 / CCUG 15529 / CIP 8149 / NCTC 11857 / SLCC 5334 / V8).